The sequence spans 118 residues: Fluoride-specific ion channel FluC 2 (118 aa).

4 consecutive transmembrane segments (helical) span residues 1–21 (MMEA…RFAI), 33–53 (FPIA…YIIG), 55–75 (GVTT…FTTF), and 93–113 (ILFL…FLGM). Residues glycine 70 and threonine 73 each contribute to the Na(+) site.

Belongs to the fluoride channel Fluc/FEX (TC 1.A.43) family.

The protein resides in the cell membrane. It carries out the reaction fluoride(in) = fluoride(out). Na(+) is not transported, but it plays an essential structural role and its presence is essential for fluoride channel function. In terms of biological role, fluoride-specific ion channel. Important for reducing fluoride concentration in the cell, thus reducing its toxicity. The polypeptide is Fluoride-specific ion channel FluC 2 (Bacillus cereus (strain ATCC 10987 / NRS 248)).